Reading from the N-terminus, the 173-residue chain is Small ribosomal subunit protein uS5 (173 aa).

The region spanning 18–81 (LREKMIAVNR…EQARRGMFKV (64 aa)) is the S5 DRBM domain.

The protein belongs to the universal ribosomal protein uS5 family. As to quaternary structure, part of the 30S ribosomal subunit. Contacts proteins S4 and S8.

Functionally, with S4 and S12 plays an important role in translational accuracy. In terms of biological role, located at the back of the 30S subunit body where it stabilizes the conformation of the head with respect to the body. This chain is Small ribosomal subunit protein uS5, found in Bordetella petrii (strain ATCC BAA-461 / DSM 12804 / CCUG 43448).